The following is a 459-amino-acid chain: FAD-dependent monooxygenase CTB5 (459 aa).

In terms of domain architecture, FAD-binding PCMH-type spans 10–187; it reads SDLHPSCIAL…TAVTLKAFEQ (178 aa).

This sequence belongs to the oxygen-dependent FAD-linked oxidoreductase family.

The protein operates within mycotoxin biosynthesis. Its function is as follows. FAD-dependent monooxygenase; part of the gene cluster that mediates the biosynthesis of cercosporin, a light-activated, non-host-selective toxin. The perylenequinone chromophore of cercosporin absorbs light energy to attain an electronically-activated triplet state and produces active oxygen species such as the hydroxyl radical, superoxide, hydrogen peroxide or singlet oxygen upon reaction with oxygen molecules. These reactive oxygen species cause damage to various cellular components including lipids, proteins and nucleic acids. The first step of cercosporin biosynthesis is performed by the polyketide synthase CTB1 which catalyzes the formation of nor-toralactone. The starter unit acyltransferase (SAT) domain of CTB1 initiates polyketide extension by the selective utilization of acetyl-CoA, which is elongated to the heptaketide in the beta-ketoacyl synthase (KS) domain by successive condensations with six malonyl units introduced by the malonyl acyltransferase (MAT) domain. The product template (PT) domain catalyzes C4-C9 and C2-C11 aldol cyclizations and dehydrations to a trihydroxynaphthalene, which is thought to be delivered to the thioesterase (TE) domain for product release. The bifunctional enzyme CTB3 then methylates nor-toralactone to toralactone before conducting an unusual oxidative aromatic ring opening. The O-methyltransferase CTB2 further methylates the nascent OH-6 of the CBT3 product, blocking further oxidation at this site before the reductase CTB6 reduces the 2-oxopropyl ketone at position C7, giving naphthalene. The FAD-dependent monooxygenase CTB5 in concert with the multicopper oxidase CTB12 are responsible for homodimerization of naphthalene with CTB7 installing the dioxepine moiety, finally producing cercosporin. The fasciclin domain-containing protein CTB11 might act with CTB5 and CTB12 whereas the roles of CTB9 and CTB10 have still to be elucidated. This Cercospora nicotianae (Barn spot disease fungus) protein is FAD-dependent monooxygenase CTB5.